The following is a 171-amino-acid chain: Signal peptidase complex catalytic subunit SEC11 (171 aa).

The Cytoplasmic portion of the chain corresponds to 1 to 6; it reads MNIRQQ. Residues 7–24 form a helical; Signal-anchor for type II membrane protein membrane-spanning segment; that stretch reads LVQLLNLAMVLSTAFMFW. Over 25–171 the chain is Lumenal; it reads KGLGLVTNSN…MALSTLLTRE (147 aa). Catalysis depends on charge relay system residues serine 44, histidine 83, and aspartate 113. Residues 157–168 are C-terminal short (CTS) helix; sequence GLLGLMALSTLL.

Belongs to the peptidase S26B family. In terms of assembly, component of the signal peptidase complex (SPC) composed of a catalytic subunit SEC11 and three accessory subunits SPC1, SPC2 and SPC3. The complex induces a local thinning of the ER membrane which is used to measure the length of the signal peptide (SP) h-region of protein substrates. This ensures the selectivity of the complex towards h-regions shorter than 18-20 amino acids. SPC associates with the translocon complex.

It localises to the endoplasmic reticulum membrane. It carries out the reaction Cleavage of hydrophobic, N-terminal signal or leader sequences from secreted and periplasmic proteins.. In terms of biological role, catalytic component of the signal peptidase complex (SPC) which catalyzes the cleavage of N-terminal signal sequences from nascent proteins as they are translocated into the lumen of the endoplasmic reticulum. Specifically cleaves N-terminal signal peptides that contain a hydrophobic alpha-helix (h-region) shorter than 18-20 amino acids. The protein is Signal peptidase complex catalytic subunit SEC11 (SEC11) of Komagataella phaffii (strain GS115 / ATCC 20864) (Yeast).